A 271-amino-acid chain; its full sequence is Interleukin-1 alpha (271 aa).

A propeptide spanning residues 1 to 112 (MAKVPDMFED…DSEEEIIKPR (112 aa)) is cleaved from the precursor. At K82 the chain carries N6-acetyllysine. The nuclear localization signal (NLS) stretch occupies residues 82–86 (KKRRL). Phosphoserine is present on S87. N-linked (GlcNAc...) asparagine glycosylation is found at N102, N121, N137, and N141.

This sequence belongs to the IL-1 family. In terms of assembly, monomer. Interacts with TMED10; the interaction mediates the translocation from the cytoplasm into the ERGIC (endoplasmic reticulum-Golgi intermediate compartment) and thereby secretion. Interacts with IL1R1. Interacts with S100A13; this interaction is the first step in the export of IL1A, followed by direct translocation of this complex across the plasma membrane. Acetylated within its nuclear localization sequence, which impacts subcellular localization. In terms of processing, proteolytic processed by CAPN1 in a calcium-dependent manner. Cleavage from 31 kDa precursor to 18 kDa biologically active molecules. Post-translationally, phosphorylated. Phosphorylation greatly enhances susceptibility to digestion and promotes the conversion of pre-IL1A alpha to the biologically active IL1A.

The protein resides in the nucleus. It localises to the cytoplasm. The protein localises to the secreted. Cytokine constitutively present intracellularly in nearly all resting non-hematopoietic cells that plays an important role in inflammation and bridges the innate and adaptive immune systems. After binding to its receptor IL1R1 together with its accessory protein IL1RAP, forms the high affinity interleukin-1 receptor complex. Signaling involves the recruitment of adapter molecules such as MYD88, IRAK1 or IRAK4. In turn, mediates the activation of NF-kappa-B and the three MAPK pathways p38, p42/p44 and JNK pathways. Within the cell, acts as an alarmin and cell death results in its liberation in the extracellular space after disruption of the cell membrane to induce inflammation and alert the host to injury or damage. In addition to its role as a danger signal, which occurs when the cytokine is passively released by cell necrosis, directly senses DNA damage and acts as signal for genotoxic stress without loss of cell integrity. The protein is Interleukin-1 alpha (IL1A) of Macaca fascicularis (Crab-eating macaque).